The chain runs to 274 residues: Cytochrome b-c1 complex subunit Rieske, mitochondrial (274 aa).

Over 79-103 (SHTDIKVPDFSDYRRSEVLDTTKSS) the chain is Mitochondrial matrix. The helical transmembrane segment at 104–140 (RESSDARKGFSYLVTATTAVGVTYAAKSIVTQFVSSM) threads the bilayer. Over 141–274 (SASADVLAMS…FTSDDLVIVG (134 aa)) the chain is Mitochondrial intermembrane. The Rieske domain maps to 187–272 (EAAVELSQLR…YEFTSDDLVI (86 aa)). [2Fe-2S] cluster-binding residues include C217, H219, C236, H239, and S241. A disulfide bond links C222 and C238.

This sequence belongs to the Rieske iron-sulfur protein family. Component of the ubiquinol-cytochrome c oxidoreductase (cytochrome b-c1 complex, complex III, CIII), a multisubunit enzyme composed of 11 subunits. The complex is composed of 3 respiratory subunits cytochrome b, cytochrome c1 and Rieske protein UQCRFS1, 2 core protein subunits UQCRC1/QCR1 and UQCRC2/QCR2, and 6 low-molecular weight protein subunits UQCRH/QCR6, UQCRB/QCR7, UQCRQ/QCR8, UQCR10/QCR9, UQCR11/QCR10 and subunit 9, the cleavage product of Rieske protein UQCRFS1. The complex exists as an obligatory dimer and forms supercomplexes (SCs) in the inner mitochondrial membrane with NADH-ubiquinone oxidoreductase (complex I, CI) and cytochrome c oxidase (complex IV, CIV), resulting in different assemblies (supercomplex SCI(1)III(2)IV(1) and megacomplex MCI(2)III(2)IV(2)). Incorporation of the Rieske protein UQCRFS1 is the penultimate step in complex III assembly. Interacts with TTC19, which is involved in the clearance of UQCRFS1 fragments. In terms of assembly, component of the ubiquinol-cytochrome c oxidoreductase (cytochrome b-c1 complex, complex III, CIII). Subunit 9 corresponds to the mitochondrial targeting sequence (MTS) of Rieske protein UQCRFS1. It is retained after processing and incorporated inside complex III, where it remains bound to the complex and localizes between the 2 core subunits UQCRC1/QCR1 and UQCRC2/QCR2. Requires [2Fe-2S] cluster as cofactor. In terms of processing, proteolytic processing is necessary for the correct insertion of UQCRFS1 in the complex III dimer. Several fragments are generated during UQCRFS1 insertion, most probably due to the endogenous matrix-processing peptidase (MPP) activity of the 2 core protein subunits UQCRC1/QCR1 and UQCRC2/QCR2, which are homologous to the 2 mitochondrial-processing peptidase (MPP) subunits beta-MPP and alpha-MPP respectively. The action of the protease is also necessary for the clearance of the UQCRFS1 fragments.

It is found in the mitochondrion inner membrane. The catalysed reaction is a quinol + 2 Fe(III)-[cytochrome c](out) = a quinone + 2 Fe(II)-[cytochrome c](out) + 2 H(+)(out). Its function is as follows. Component of the ubiquinol-cytochrome c oxidoreductase, a multisubunit transmembrane complex that is part of the mitochondrial electron transport chain which drives oxidative phosphorylation. The respiratory chain contains 3 multisubunit complexes succinate dehydrogenase (complex II, CII), ubiquinol-cytochrome c oxidoreductase (cytochrome b-c1 complex, complex III, CIII) and cytochrome c oxidase (complex IV, CIV), that cooperate to transfer electrons derived from NADH and succinate to molecular oxygen, creating an electrochemical gradient over the inner membrane that drives transmembrane transport and the ATP synthase. The cytochrome b-c1 complex catalyzes electron transfer from ubiquinol to cytochrome c, linking this redox reaction to translocation of protons across the mitochondrial inner membrane, with protons being carried across the membrane as hydrogens on the quinol. In the process called Q cycle, 2 protons are consumed from the matrix, 4 protons are released into the intermembrane space and 2 electrons are passed to cytochrome c. The Rieske protein is a catalytic core subunit containing a [2Fe-2S] iron-sulfur cluster. It cycles between 2 conformational states during catalysis to transfer electrons from the quinol bound in the Q(0) site in cytochrome b to cytochrome c1. Incorporation of UQCRFS1 is the penultimate step in complex III assembly. Functionally, component of the ubiquinol-cytochrome c oxidoreductase (cytochrome b-c1 complex, complex III, CIII). UQCRFS1 undergoes proteolytic processing once it is incorporated in the complex III dimer. One of the fragments, called subunit 9, corresponds to its mitochondrial targeting sequence (MTS). The proteolytic processing is necessary for the correct insertion of UQCRFS1 in the complex III dimer, but the persistence of UQCRFS1-derived fragments may prevent newly imported UQCRFS1 to be processed and assembled into complex III and is detrimental for the complex III structure and function. This is Cytochrome b-c1 complex subunit Rieske, mitochondrial (UQCRFS1) from Aotus azarae (Azara's night monkey).